A 193-amino-acid chain; its full sequence is Large ribosomal subunit protein bL25 (193 aa).

Belongs to the bacterial ribosomal protein bL25 family. CTC subfamily. In terms of assembly, part of the 50S ribosomal subunit; part of the 5S rRNA/L5/L18/L25 subcomplex. Contacts the 5S rRNA. Binds to the 5S rRNA independently of L5 and L18.

This is one of the proteins that binds to the 5S RNA in the ribosome where it forms part of the central protuberance. The chain is Large ribosomal subunit protein bL25 from Lachnoclostridium phytofermentans (strain ATCC 700394 / DSM 18823 / ISDg) (Clostridium phytofermentans).